The chain runs to 227 residues: MKPSERICAALDFPTFAAAEPFARAVAPEVGLLKVGLELFAAEGPAAVRGAARLGRPVFLDLKLHDIPNTVEGAARSAAASGAALLTVHAAGGAEMVRAAVRGAGPGVRVLAVTVLTSLDAAALDAVGLAGPPEAAVVRLARLAVVAGAGGIVCSPHEVAAVRAAVGPGPLLVVPGVRPAGAAKGDQARVATPAEAVRAGADVIVVGRPLRDAPDPAAAARAIAAGL.

Substrate-binding positions include D12, K34, 61-70, T117, R178, Q187, G207, and R208; that span reads DLKLHDIPNT. K63 serves as the catalytic Proton donor.

This sequence belongs to the OMP decarboxylase family. Type 1 subfamily. As to quaternary structure, homodimer.

It carries out the reaction orotidine 5'-phosphate + H(+) = UMP + CO2. It participates in pyrimidine metabolism; UMP biosynthesis via de novo pathway; UMP from orotate: step 2/2. Functionally, catalyzes the decarboxylation of orotidine 5'-monophosphate (OMP) to uridine 5'-monophosphate (UMP). This is Orotidine 5'-phosphate decarboxylase from Anaeromyxobacter dehalogenans (strain 2CP-1 / ATCC BAA-258).